A 115-amino-acid chain; its full sequence is Small ribosomal subunit protein bS18c (115 aa).

The interval 91–115 (TNALKARTQNKDQKKEKFQINKKKK) is disordered. The segment covering 99–109 (QNKDQKKEKFQ) has biased composition (basic and acidic residues).

The protein belongs to the bacterial ribosomal protein bS18 family. As to quaternary structure, part of the 30S ribosomal subunit.

The protein resides in the plastid. It localises to the chloroplast. This is Small ribosomal subunit protein bS18c from Ipomoea purpurea (Common morning glory).